Reading from the N-terminus, the 251-residue chain is Uridylate kinase (251 aa).

Residue 24 to 27 (KISG) participates in ATP binding. The tract at residues 32–37 (GDQGFG) is involved in allosteric activation by GTP. Glycine 66 contacts UMP. The ATP site is built by glycine 67 and arginine 71. UMP is bound by residues aspartate 86 and 147–154 (TGNPYFTT). 3 residues coordinate ATP: asparagine 175, tyrosine 181, and aspartate 184.

The protein belongs to the UMP kinase family. In terms of assembly, homohexamer.

The protein localises to the cytoplasm. The enzyme catalyses UMP + ATP = UDP + ADP. It participates in pyrimidine metabolism; CTP biosynthesis via de novo pathway; UDP from UMP (UMPK route): step 1/1. Allosterically activated by GTP. Inhibited by UTP. Its function is as follows. Catalyzes the reversible phosphorylation of UMP to UDP. The chain is Uridylate kinase from Ruegeria pomeroyi (strain ATCC 700808 / DSM 15171 / DSS-3) (Silicibacter pomeroyi).